We begin with the raw amino-acid sequence, 565 residues long: MTSAVSFPITSQASDMLSKFYGSDLGSLYGTLAEKYSGGKPELAEKLRDYACKGWFGYSSPILTSVTGSGLPISCFLLYVPDTIEGLVDHTSELRWLSVMGGGVAGHWDDVRGPSAKSCGTIPFLHTVDADMSAYWQGKVRRGSYAAYMSISHPDLIEFITMRTPTGDVNRKNLNLHHGVNITDTFMRCVERGENWDLVDPKSGAVAHTVSARELWERILETRFRTGEPYLNFIDTANRGLHPALKRKGLKIRGSNLCNEIHLPTAADRTAVCCLSSVNLERYDEWRETDLVECLVEMLDNVIQTFVDEAPLKTPHTARAVRSAAGERSIGLGAMGWARYLQKHRIPFDSEEAVRLTGIIFRGIKSAAVRATRALAKERGEAPDLTGYGVRNAHLLAVAPNANSALLLGTSPSVEPEIGAAYVHRTRVGSHQAVNPYLKRDLESLGLDTEEVWDSIVSNKGSVQHIAALPDSLKKVYKTSFEMDQRVIVRQAAERQRHLCQGQSLNLFFPIGADKTNLSDVHRLAWKSGCKGLYYLRTCAGRTGHKIFEAKKNPEKTEECTACQG.

Substrate is bound by residues Ser-60, 74-75 (SC), Gly-103, 256-260 (NLCNE), and 400-404 (PNANS). A disulfide bond links Cys-75 and Cys-273. The active-site Proton acceptor is Asn-256. The active-site Cysteine radical intermediate is the Cys-258. The active-site Proton acceptor is the Glu-260.

Belongs to the ribonucleoside diphosphate reductase large chain family. In terms of assembly, heterotetramer composed of a homodimer of the large subunit (R1) and a homodimer of the small subunit (R2). Larger multisubunit protein complex are also active, composed of (R1)n(R2)n.

It carries out the reaction a 2'-deoxyribonucleoside 5'-diphosphate + [thioredoxin]-disulfide + H2O = a ribonucleoside 5'-diphosphate + [thioredoxin]-dithiol. Under complex allosteric control mediated by deoxynucleoside triphosphates and ATP binding. The type of nucleotide bound at the specificity site determines substrate preference. It seems probable that ATP makes the enzyme reduce CDP and UDP, dGTP favors ADP reduction and dTTP favors GDP reduction. In terms of biological role, ribonucleoside-diphosphate reductase holoenzyme provides the precursors necessary for viral DNA synthesis. Allows virus growth in non-dividing cells. Catalyzes the biosynthesis of deoxyribonucleotides from the corresponding ribonucleotides. This is Putative ribonucleoside-diphosphate reductase large subunit from Frog virus 3 (isolate Goorha) (FV-3).